Reading from the N-terminus, the 211-residue chain is Large ribosomal subunit protein uL4 (211 aa).

The segment covering 41-53 has biased composition (polar residues); the sequence is QAHSRQGTASTLT. A disordered region spans residues 41 to 78; the sequence is QAHSRQGTASTLTRAEVRGGGRKPYKQKGTGRARQGTI. Positions 60–71 are enriched in basic residues; that stretch reads GGRKPYKQKGTG.

This sequence belongs to the universal ribosomal protein uL4 family. In terms of assembly, part of the 50S ribosomal subunit.

Its function is as follows. One of the primary rRNA binding proteins, this protein initially binds near the 5'-end of the 23S rRNA. It is important during the early stages of 50S assembly. It makes multiple contacts with different domains of the 23S rRNA in the assembled 50S subunit and ribosome. Functionally, forms part of the polypeptide exit tunnel. This is Large ribosomal subunit protein uL4 from Prochlorococcus marinus (strain MIT 9303).